We begin with the raw amino-acid sequence, 174 residues long: Large ribosomal subunit protein uL18 (174 aa).

Belongs to the universal ribosomal protein uL18 family. Part of the 50S ribosomal subunit. Contacts the 5S and 23S rRNAs.

In terms of biological role, this is one of the proteins that bind and probably mediate the attachment of the 5S RNA into the large ribosomal subunit, where it forms part of the central protuberance. The chain is Large ribosomal subunit protein uL18 from Methanosarcina barkeri (strain Fusaro / DSM 804).